A 375-amino-acid polypeptide reads, in one-letter code: 4-hydroxy-3-methylbut-2-en-1-yl diphosphate synthase (flavodoxin) (375 aa).

Residues Cys270, Cys273, Cys305, and Glu312 each coordinate [4Fe-4S] cluster.

This sequence belongs to the IspG family. It depends on [4Fe-4S] cluster as a cofactor.

It catalyses the reaction (2E)-4-hydroxy-3-methylbut-2-enyl diphosphate + oxidized [flavodoxin] + H2O + 2 H(+) = 2-C-methyl-D-erythritol 2,4-cyclic diphosphate + reduced [flavodoxin]. The protein operates within isoprenoid biosynthesis; isopentenyl diphosphate biosynthesis via DXP pathway; isopentenyl diphosphate from 1-deoxy-D-xylulose 5-phosphate: step 5/6. Converts 2C-methyl-D-erythritol 2,4-cyclodiphosphate (ME-2,4cPP) into 1-hydroxy-2-methyl-2-(E)-butenyl 4-diphosphate. The chain is 4-hydroxy-3-methylbut-2-en-1-yl diphosphate synthase (flavodoxin) from Yersinia pestis (strain Pestoides F).